Reading from the N-terminus, the 183-residue chain is ATP synthase subunit delta (183 aa).

The protein belongs to the ATPase delta chain family. As to quaternary structure, F-type ATPases have 2 components, F(1) - the catalytic core - and F(0) - the membrane proton channel. F(1) has five subunits: alpha(3), beta(3), gamma(1), delta(1), epsilon(1). CF(0) has four main subunits: a(1), b(1), b'(1) and c(10-14). The alpha and beta chains form an alternating ring which encloses part of the gamma chain. F(1) is attached to F(0) by a central stalk formed by the gamma and epsilon chains, while a peripheral stalk is formed by the delta, b and b' chains.

It localises to the cellular thylakoid membrane. Functionally, f(1)F(0) ATP synthase produces ATP from ADP in the presence of a proton or sodium gradient. F-type ATPases consist of two structural domains, F(1) containing the extramembraneous catalytic core and F(0) containing the membrane proton channel, linked together by a central stalk and a peripheral stalk. During catalysis, ATP synthesis in the catalytic domain of F(1) is coupled via a rotary mechanism of the central stalk subunits to proton translocation. This protein is part of the stalk that links CF(0) to CF(1). It either transmits conformational changes from CF(0) to CF(1) or is implicated in proton conduction. This is ATP synthase subunit delta from Nostoc sp. (strain PCC 7120 / SAG 25.82 / UTEX 2576).